Reading from the N-terminus, the 504-residue chain is MEDDVTTTERLPAPPLDTASKRVGFISLGCPKALVDSERILTQLRAEGYEVAPSYEGADAVIVNTCGFITPAVEESLSAIGEALDATGKVIVTGCLGERPEKIMERHPKVAAITGSEAVDDVMGHVRELLPIDQGAFTGLLPVAAPGMRAGVETPQRENTRHGDVFAPSVKLTPRHYAYVKVAEGCNHTCAFCIIPKLRGLQVSRDAGAVLYEAYRLIAGGTKELMIIAQDTSAYGVDLRYRESEFQGEQVRAHLTDLAVKLGEMGAWVRMHYVYPYPHVDRVVELMAQGKVLPYLDIPLQHASPKILKLMRRPGAGKQLDTIRRWREICPELVIRSTFIVGFPGETEEDFQELLQFLEDARLDRVGAFPYSDIEEADANALPGAVPEEVKQERLARFMEVAQRISTEKLSEKVGRVMDVIIDEFNDDEDDQPGTRLIGRTKGDAPGIDGQVYLYAGDFAGLVKIGDIVRARIEDSDEYDLFGEVIEKPEWKPNVPQLGHFGKH.

Positions 21–131 (KRVGFISLGC…VMGHVRELLP (111 aa)) constitute an MTTase N-terminal domain. [4Fe-4S] cluster contacts are provided by C30, C66, C95, C186, C190, and C193. One can recognise a Radical SAM core domain in the interval 172–408 (LTPRHYAYVK…MEVAQRISTE (237 aa)). One can recognise a TRAM domain in the interval 411–487 (SEKVGRVMDV…EYDLFGEVIE (77 aa)).

Belongs to the methylthiotransferase family. RimO subfamily. Requires [4Fe-4S] cluster as cofactor.

The protein resides in the cytoplasm. The catalysed reaction is L-aspartate(89)-[ribosomal protein uS12]-hydrogen + (sulfur carrier)-SH + AH2 + 2 S-adenosyl-L-methionine = 3-methylsulfanyl-L-aspartate(89)-[ribosomal protein uS12]-hydrogen + (sulfur carrier)-H + 5'-deoxyadenosine + L-methionine + A + S-adenosyl-L-homocysteine + 2 H(+). Its function is as follows. Catalyzes the methylthiolation of an aspartic acid residue of ribosomal protein uS12. The protein is Ribosomal protein uS12 methylthiotransferase RimO of Deinococcus radiodurans (strain ATCC 13939 / DSM 20539 / JCM 16871 / CCUG 27074 / LMG 4051 / NBRC 15346 / NCIMB 9279 / VKM B-1422 / R1).